Consider the following 146-residue polypeptide: Putative pre-16S rRNA nuclease (146 aa).

Belongs to the YqgF nuclease family.

It is found in the cytoplasm. In terms of biological role, could be a nuclease involved in processing of the 5'-end of pre-16S rRNA. This is Putative pre-16S rRNA nuclease from Burkholderia thailandensis (strain ATCC 700388 / DSM 13276 / CCUG 48851 / CIP 106301 / E264).